Here is a 502-residue protein sequence, read N- to C-terminus: Glutamate--tRNA ligase (502 aa).

The 'HIGH' region motif lies at 9–19; sequence PSPTGFPHVGT. The short motif at 250-254 is the 'KMSKS' region element; sequence KLSKR. Residue Lys-253 coordinates ATP.

This sequence belongs to the class-I aminoacyl-tRNA synthetase family. Glutamate--tRNA ligase type 1 subfamily. In terms of assembly, monomer.

Its subcellular location is the cytoplasm. The enzyme catalyses tRNA(Glu) + L-glutamate + ATP = L-glutamyl-tRNA(Glu) + AMP + diphosphate. Functionally, catalyzes the attachment of glutamate to tRNA(Glu) in a two-step reaction: glutamate is first activated by ATP to form Glu-AMP and then transferred to the acceptor end of tRNA(Glu). The chain is Glutamate--tRNA ligase from Acinetobacter baumannii (strain AYE).